We begin with the raw amino-acid sequence, 1338 residues long: Thioester-containing protein 1 allele R1 (1338 aa).

An N-terminal signal peptide occupies residues 1-21 (MWQFIRSRILTVIIFIGAAHG). N-linked (GlcNAc...) asparagine glycosylation is found at N68, N199, N242, N312, and N481. A may contain the cleavage site region spans residues 580-609 (ENEFDIFHSLGLFARTLDDILFDSANEKTG). N637, N728, and N813 each carry an N-linked (GlcNAc...) asparagine glycan. A cross-link (isoglutamyl cysteine thioester (Cys-Gln)) is located at residues 859–862 (CGEQ). N-linked (GlcNAc...) asparagine glycosylation is found at N919 and N1065. Disulfide bonds link C1217–C1283, C1326–C1338, and C1329–C1334.

In terms of assembly, heterodimer of a TEP1-N chain and an TEP1-C chain non-covalently linked. Forms a complex composed of TEP1-N and TEP1-C heterodimer, LRIM1 and APL1C; the interaction stabilizes TEP1-N and TEP1-C heterodimer, prevents its binding to tissues while circulating in the hemolymph and protects the thioester bond from hydrolysis. Mature TEP1 and to a lesser extent full-length TEP1 interact with SPCLIP1; the interaction is induced by microbial infection. In terms of processing, in the hemolymph, the full-length protein is cleaved by an unknow protease into a 75kDa N-terminal (TEP1-N) chain and an 80kDa C-terminal (TEP1-C) chain which remain non-covalently linked. The TEP1-C chain contains the thioester bond which covalently binds to the pathogen surface. Cleavage is induced by bacterial infection or aseptic wound injury. During embryonic and pupal development, the cleaved form is the predominant form. N-glycosylated.

It localises to the secreted. Its function is as follows. Plays an essential role in the innate immune response against bacteria, fungi and protozoa infection. After proteolytic cleavage, the protein C-terminus binds covalently through a thioester bond to the pathogen surface resulting in pathogen clearance either by melanization or lysis. Initiate the recruitment and activation of a cascade of proteases, mostly of CLIP-domain serine proteases, which leads to the proteolytic cleavage of the prophenoloxidase (PPO) into active phenoloxidase (PO), the rate-limiting enzyme in melanin biosynthesis. In response to parasite P.berghei-mediated infection, binds to and mediates killing of ookinetes, as they egress from midgut epithelial cells into the basal labyrinth, by both lysis and melanization. During bacterial infection, binds to both Gram-positive and Gram-negative bacteria but only promotes phagocytosis of Gram-negative bacteria. Promotes the accumulation of SPCLIP1 onto the surface of P.berghei ookinetes and bacterium E.coli which leads to the melanization of the pathogen. Recruits CLIPA2 to bacteria surface. In response to bacterial infection, required for periostial hemocyte aggregation, but not for the aggregation of sessile hemocytes in non-periostial regions. During the late stage of fungus B.bassiana-mediated infection, required for the initiation of hyphae melanization by binding to the surface of hyphae and recruiting prophenoloxidase PPO to them. Plays a role in male fertility by binding to defective sperm cells and promoting their removal during spermatogenesis. Functionally, binds to and mediates killing of parasite P.bergei ookinetes by lysis and melanization. Binds covalently through a thioester bond to the pathogen surface resulting in pathogen clearance. This Anopheles gambiae (African malaria mosquito) protein is Thioester-containing protein 1 allele R1.